Here is a 516-residue protein sequence, read N- to C-terminus: MTKVETRLEILDVTLRDGEQTRGVSFSTSEKLNIAKFLLQKLNVDRVEIASARVSKGELETVQKIMEWAATEQLTERIEILGFVDGNKTVDWIKDSGAKVLNLLTKGSLHHLEKQLGKTPKEFFTDVSFVIEYAIKSGLKINVYLEDWSNGFRNSPDYVKSLVEHLSKEHIERIFLPDTLGVLSPEETFQGVDSLIQKYPDIHFEFHGHNDYDLSVANSLQAIRAGVKGLHASINGLGERAGNTPLEALVTTIHDKSNSKTNINEIAITEASRLVEVFSGKRISANRPIVGEDVFTQTAGVHADGDKKGNLYANPILPERFGRKRSYALGKLAGKASISENVKQLGMVLSEVVLQKVLERVIELGDQNKLVTPEDLPFIIADVSGRTGEKVLTIKSCNIHSGIGIRPHAQIELEYQGKIHKEISEGDGGYDAFMNALTKITNRLGISIPKLIDYEVRIPPGGKTDALVETRITWNKSLDLEEDQTFKTMGVHPDQTVAAVHATEKMLNQILQPWQI.

Positions Leu-8–Thr-269 constitute a Pyruvate carboxyltransferase domain. Arg-16 acts as the Proton donor in catalysis. Residues Arg-16–Asp-17 and Tyr-144 each bind pyruvate. A Mn(2+)-binding site is contributed by Asp-17. Glu-146 serves as the catalytic Proton acceptor. Thr-179 contributes to the pyruvate binding site. Residues His-207 and His-209 each coordinate Mn(2+).

This sequence belongs to the alpha-IPM synthase/homocitrate synthase family. In terms of assembly, homodimer. Requires Mn(2+) as cofactor.

It catalyses the reaction pyruvate + acetyl-CoA + H2O = (3R)-citramalate + CoA + H(+). The protein operates within amino-acid biosynthesis; L-isoleucine biosynthesis; 2-oxobutanoate from pyruvate: step 1/3. Regulated by the end-product isoleucine via a feedback inhibition. The binding of isoleucine has inhibitory effects on the binding of both pyruvate and acetyl-CoA. May act via conformational change of the dimer interface of the regulatory domain, leading to inhibition of the catalytic reaction. In terms of biological role, catalyzes the condensation of pyruvate and acetyl-coenzyme A to form (R)-citramalate. Shows strict substrate specificity for pyruvate. Cannot use alpha-ketoisovalerate, alpha-ketobutyrate, alpha-ketoisocaproate, alpha-ketoglutarate or glyoxylate. The sequence is that of (R)-citramalate synthase CimA from Leptospira interrogans serogroup Icterohaemorrhagiae serovar Lai (strain 56601).